The chain runs to 369 residues: Methylthioribose-1-phosphate isomerase (369 aa).

Substrate is bound by residues 54 to 56 (RGA), R95, and Q208. D249 serves as the catalytic Proton donor. Substrate is bound at residue 259–260 (NK).

This sequence belongs to the eIF-2B alpha/beta/delta subunits family. MtnA subfamily.

It carries out the reaction 5-(methylsulfanyl)-alpha-D-ribose 1-phosphate = 5-(methylsulfanyl)-D-ribulose 1-phosphate. It participates in amino-acid biosynthesis; L-methionine biosynthesis via salvage pathway; L-methionine from S-methyl-5-thio-alpha-D-ribose 1-phosphate: step 1/6. Functionally, catalyzes the interconversion of methylthioribose-1-phosphate (MTR-1-P) into methylthioribulose-1-phosphate (MTRu-1-P). This is Methylthioribose-1-phosphate isomerase from Desulfosudis oleivorans (strain DSM 6200 / JCM 39069 / Hxd3) (Desulfococcus oleovorans).